Consider the following 104-residue polypeptide: UPF0145 protein cbdbA1711 (104 aa).

The protein belongs to the UPF0145 family.

The polypeptide is UPF0145 protein cbdbA1711 (Dehalococcoides mccartyi (strain CBDB1)).